The chain runs to 481 residues: MIMEFEFSKMLEEVLTWIVAHLDGPLWDATIIILLGTGLFFTITTGFVQFRLFPASLREMWFGRSVEGSSLTPFQAFTTGLASRVGVGNIGGVATAIALGGEGAVFWMWVTAFIGMSSAFAESTLAQLFKIQDKDGSFRGGPAYYIVQGLKSRCMAVAFALALIFTFGFAFNSVQANSIVEATSNAWNWKGEYVGISLVIFTALIIFGGVKRIAIISSNLVPMMALFYLIMAVIILGMHIDMIPSVIHRIVQSAFSFDAAAGGMFGALVSKAMMMGIKRGLFSNEAGMGSAPNSAAAAHVKHPVSQGLVQMLGVFVDTMIVCTCTAVIILLSNNYGSETLKSISLTQNALQYHIGEFGAHFLAFILLLFAYSSIIGNYAYAESNIRFIKNKPWLVLLFRLMVLFFVYFGAVRSGNVVWNFADTVMAVMAIINLIAILMLSPIVWKLMKDYQRQLKEGKTPEFKIDEYPELRKKIFDSRIWK.

Helical transmembrane passes span 30–50, 96–116, 154–174, 196–216, 220–240, 250–270, 311–331, 354–374, 391–411, and 424–444; these read TIII…FVQF, AIAL…FIGM, CMAV…FNSV, ISLV…IAII, LVPM…GMHI, IVQS…ALVS, MLGV…IILL, IGEF…YSSI, KPWL…FGAV, and VMAV…PIVW.

Belongs to the alanine or glycine:cation symporter (AGCS) (TC 2.A.25) family.

The protein resides in the cell inner membrane. This is an uncharacterized protein from Haemophilus influenzae (strain ATCC 51907 / DSM 11121 / KW20 / Rd).